The following is a 425-amino-acid chain: Serine--tRNA ligase (425 aa).

Residue 233–235 coordinates L-serine; the sequence is TAE. 264–266 lines the ATP pocket; it reads RRE. Residue Glu-287 participates in L-serine binding. Residue 351–354 participates in ATP binding; sequence EISS. Position 385 (Ser-385) interacts with L-serine.

The protein belongs to the class-II aminoacyl-tRNA synthetase family. Type-1 seryl-tRNA synthetase subfamily. As to quaternary structure, homodimer. The tRNA molecule binds across the dimer.

The protein resides in the cytoplasm. The enzyme catalyses tRNA(Ser) + L-serine + ATP = L-seryl-tRNA(Ser) + AMP + diphosphate + H(+). It carries out the reaction tRNA(Sec) + L-serine + ATP = L-seryl-tRNA(Sec) + AMP + diphosphate + H(+). Its pathway is aminoacyl-tRNA biosynthesis; selenocysteinyl-tRNA(Sec) biosynthesis; L-seryl-tRNA(Sec) from L-serine and tRNA(Sec): step 1/1. Functionally, catalyzes the attachment of serine to tRNA(Ser). Is also able to aminoacylate tRNA(Sec) with serine, to form the misacylated tRNA L-seryl-tRNA(Sec), which will be further converted into selenocysteinyl-tRNA(Sec). The protein is Serine--tRNA ligase of Prochlorococcus marinus (strain MIT 9515).